Here is a 383-residue protein sequence, read N- to C-terminus: Serine protease 23 (383 aa).

The signal sequence occupies residues 1–19; sequence MAGIPGLLFLLFLLLCAVG. Asparagine 93 carries an N-linked (GlcNAc...) asparagine glycan. Positions 108–127 are disordered; that stretch reads SSGGGAQHRDSGSSGKSRRK. Position 109 is a phosphoserine; by FAM20C (serine 109). The cysteines at positions 160 and 176 are disulfide-linked. Histidine 175 functions as the Charge relay system in the catalytic mechanism. N-linked (GlcNAc...) asparagine glycosylation is present at asparagine 207. Residues aspartate 240 and serine 316 each act as charge relay system in the active site.

Belongs to the peptidase S1 family.

The protein localises to the secreted. This is Serine protease 23 (PRSS23) from Macaca mulatta (Rhesus macaque).